The primary structure comprises 565 residues: DNA-dependent metalloprotease SPRTN (565 aa).

The SprT-like domain maps to arginine 23–histidine 130. Zn(2+) is bound at residue histidine 88. Residue glutamate 89 is part of the active site. 2 residues coordinate Zn(2+): histidine 92 and histidine 107. The segment at glutamate 191–lysine 219 is disordered. A compositionally biased stretch (polar residues) spans proline 205–histidine 215. Positions phenylalanine 231 to phenylalanine 239 match the SHP-box motif. Residues serine 288–leucine 295 carry the PIP-box motif. Residues threonine 349–lysine 389 form a disordered region. Composition is skewed to polar residues over residues proline 351 to lysine 361 and leucine 372 to serine 386. The segment at lysine 436–proline 463 adopts a UBZ4-type 1 zinc-finger fold. Positions 439, 442, 454, and 458 each coordinate Zn(2+). A Nuclear localization signal motif is present at residues glutamine 476–isoleucine 499. The UBZ4-type 2 zinc-finger motif lies at lysine 537–asparagine 564. Zn(2+)-binding residues include cysteine 540, cysteine 543, histidine 555, and cysteine 559.

The protein belongs to the Spartan family. Homodimer. It depends on Zn(2+) as a cofactor. Autocatalytically cleaved in response to double-stranded DNA-binding: autocatalytic cleavage takes place in trans and leads to inactivation.

The protein localises to the nucleus. Its subcellular location is the chromosome. DNA-binding activates the protease activity: single-stranded DNA-binding specifically activates ability to cleave covalent DNA-protein cross-links (DPCs). In contrast, double-stranded DNA-binding specifically activates autocatalytic cleavage, and subsequent inactivation. Its function is as follows. DNA-dependent metalloendopeptidase that mediates the proteolytic cleavage of covalent DNA-protein cross-links (DPCs) during DNA synthesis, thereby playing a key role in maintaining genomic integrity. DPCs are highly toxic DNA lesions that interfere with essential chromatin transactions, such as replication and transcription, and which are induced by reactive agents, such as UV light or formaldehyde. Associates with the DNA replication machinery and specifically removes DPCs during DNA synthesis. Catalyzes proteolytic cleavage of the hmces DNA-protein cross-link following unfolding by the brip1/fancj helicase. Acts as a pleiotropic protease for DNA-binding proteins cross-linked with DNA, such as top1, top2a, histones H3 and H4. Mediates degradation of DPCs that are not ubiquitinated, while it is not able to degrade ubiquitinated DPCs. SPRTN activation requires polymerase collision with DPCs followed by helicase bypass of DPCs. May also act as a 'reader' of ubiquitinated pcna: facilitates chromatin association of rad18 and is required for efficient pcna monoubiquitination, promoting a feed-forward loop to enhance pcna ubiquitination and translesion DNA synthesis. Acts as a regulator of translesion DNA synthesis by recruiting vcp/p97 to sites of DNA damage. This chain is DNA-dependent metalloprotease SPRTN, found in Xenopus laevis (African clawed frog).